Consider the following 562-residue polypeptide: Potassium-transporting ATPase potassium-binding subunit (562 aa).

Helical transmembrane passes span 6 to 26 (FLLI…LGSF), 63 to 83 (ALAI…LLMM), 132 to 152 (GLTV…FALI), 175 to 195 (LYVL…QGVL), 253 to 273 (FVQM…FGQV), 283 to 303 (LIWA…YAEL), 327 to 347 (FGIL…CGAV), 356 to 376 (ALGG…FGGV), 379 to 399 (GLYG…LMIG), 416 to 436 (MTAL…ALAL), 483 to 503 (LLLA…VLAI), and 526 to 546 (LFIG…FIPA).

It belongs to the KdpA family. As to quaternary structure, the system is composed of three essential subunits: KdpA, KdpB and KdpC.

Its subcellular location is the cell inner membrane. In terms of biological role, part of the high-affinity ATP-driven potassium transport (or Kdp) system, which catalyzes the hydrolysis of ATP coupled with the electrogenic transport of potassium into the cytoplasm. This subunit binds the periplasmic potassium ions and delivers the ions to the membrane domain of KdpB through an intramembrane tunnel. The protein is Potassium-transporting ATPase potassium-binding subunit of Yersinia enterocolitica serotype O:8 / biotype 1B (strain NCTC 13174 / 8081).